Here is a 454-residue protein sequence, read N- to C-terminus: MNSKLSLFDIRTFLESCLLSVTNLSEDIRINNICTDTRSLVSGDLFLALRGESFDGHSFIPQALTAGAIAVVTDRPVEGLGETVAQFLVEDTLVAYQHIAAGWRQRFTIPIIGVTGSVGKTTTKELIAAVLSQFGNVHKTRANYNNEIGVPKTLLELSPDHDFAIVEMAMRGRGQIALLADIAKPTIGLITNVGTAHIGLLGSELAIAEAKCELLAHQPPESTAILNRDNALLMETAQRFWQGKTITYGLEGGDVHGTVDGENLILDGVSLPLPLAGVHNASNYLAAIALAQCLGLDWQQLQSGLTVELPKGRARRYQWGQDVVLLDETYNDGLESMLASLDLLANTPGKRRLAVLGAMKELGDYGPTFHQRVGAKVKALGLDGLFLLANDPNTDAIAAGANGVETQSFSDGPSLVAALKTTLQPGDRLLFKASNSVGLGAVVSQLLAENPTSV.

An ATP-binding site is contributed by 116 to 122; sequence GSVGKTT.

The protein belongs to the MurCDEF family. MurF subfamily.

It is found in the cytoplasm. The enzyme catalyses D-alanyl-D-alanine + UDP-N-acetyl-alpha-D-muramoyl-L-alanyl-gamma-D-glutamyl-meso-2,6-diaminopimelate + ATP = UDP-N-acetyl-alpha-D-muramoyl-L-alanyl-gamma-D-glutamyl-meso-2,6-diaminopimeloyl-D-alanyl-D-alanine + ADP + phosphate + H(+). The protein operates within cell wall biogenesis; peptidoglycan biosynthesis. Involved in cell wall formation. Catalyzes the final step in the synthesis of UDP-N-acetylmuramoyl-pentapeptide, the precursor of murein. The polypeptide is UDP-N-acetylmuramoyl-tripeptide--D-alanyl-D-alanine ligase (Synechocystis sp. (strain ATCC 27184 / PCC 6803 / Kazusa)).